The chain runs to 283 residues: Phosphatidylserine decarboxylase proenzyme (283 aa).

Residues D89, H146, and S249 each act as charge relay system; for autoendoproteolytic cleavage activity in the active site. S249 acts as the Schiff-base intermediate with substrate; via pyruvic acid; for decarboxylase activity in catalysis. S249 bears the Pyruvic acid (Ser); by autocatalysis mark.

It belongs to the phosphatidylserine decarboxylase family. PSD-B subfamily. Prokaryotic type I sub-subfamily. As to quaternary structure, heterodimer of a large membrane-associated beta subunit and a small pyruvoyl-containing alpha subunit. It depends on pyruvate as a cofactor. In terms of processing, is synthesized initially as an inactive proenzyme. Formation of the active enzyme involves a self-maturation process in which the active site pyruvoyl group is generated from an internal serine residue via an autocatalytic post-translational modification. Two non-identical subunits are generated from the proenzyme in this reaction, and the pyruvate is formed at the N-terminus of the alpha chain, which is derived from the carboxyl end of the proenzyme. The autoendoproteolytic cleavage occurs by a canonical serine protease mechanism, in which the side chain hydroxyl group of the serine supplies its oxygen atom to form the C-terminus of the beta chain, while the remainder of the serine residue undergoes an oxidative deamination to produce ammonia and the pyruvoyl prosthetic group on the alpha chain. During this reaction, the Ser that is part of the protease active site of the proenzyme becomes the pyruvoyl prosthetic group, which constitutes an essential element of the active site of the mature decarboxylase.

It localises to the cell membrane. The enzyme catalyses a 1,2-diacyl-sn-glycero-3-phospho-L-serine + H(+) = a 1,2-diacyl-sn-glycero-3-phosphoethanolamine + CO2. The protein operates within phospholipid metabolism; phosphatidylethanolamine biosynthesis; phosphatidylethanolamine from CDP-diacylglycerol: step 2/2. In terms of biological role, catalyzes the formation of phosphatidylethanolamine (PtdEtn) from phosphatidylserine (PtdSer). This is Phosphatidylserine decarboxylase proenzyme from Legionella pneumophila subsp. pneumophila (strain Philadelphia 1 / ATCC 33152 / DSM 7513).